We begin with the raw amino-acid sequence, 317 residues long: Phospholipase A1 1 (317 aa).

Positions 1–7 are cleaved as a signal peptide; it reads RLIMFVG. A propeptide spanning residues 8 to 17 is cleaved from the precursor; sequence DPSSSNELDR. Residues Cys-21 and Cys-104 are joined by a disulfide bond. Asn-25 is a glycosylation site (N-linked (GlcNAc...) asparagine). The active-site Nucleophile is Ser-154. Asp-182 (charge relay system) is an active-site residue. Residues Cys-193 and Cys-198 are joined by a disulfide bond. A glycan (N-linked (GlcNAc...) asparagine) is linked at Asn-229. An intrachain disulfide couples Cys-236 to Cys-244. His-246 acts as the Charge relay system in catalysis. Disulfide bonds link Cys-261-Cys-285, Cys-262-Cys-310, and Cys-278-Cys-283.

This sequence belongs to the AB hydrolase superfamily. Lipase family. In terms of tissue distribution, expressed by the venom gland.

Its subcellular location is the secreted. It carries out the reaction a 1,2-diacyl-sn-glycero-3-phosphocholine + H2O = a 2-acyl-sn-glycero-3-phosphocholine + a fatty acid + H(+). Functionally, catalyzes the hydrolysis of phosphatidylcholine with phospholipase A1 activity. May act as an allergen and induce hemolytic activity. This chain is Phospholipase A1 1, found in Dolichovespula maculata (Bald-faced hornet).